Here is a 261-residue protein sequence, read N- to C-terminus: uncharacterized protein (261 aa).

6 consecutive transmembrane segments (helical) span residues 31 to 51 (TFLS…TGIV), 71 to 91 (TNVM…SWLL), 101 to 121 (LAYI…AGIA), 130 to 150 (LTSS…ASFI), 167 to 187 (LLLF…IPYV), and 213 to 233 (FAWL…YLAI).

Its subcellular location is the cell membrane. This is an uncharacterized protein from Mycoplasma genitalium (strain ATCC 33530 / DSM 19775 / NCTC 10195 / G37) (Mycoplasmoides genitalium).